Reading from the N-terminus, the 238-residue chain is 5'-deoxynucleotidase YBR242W (238 aa).

The region spanning 77–183 (ISDHMYRLSI…VKDIDKYEML (107 aa)) is the HD domain. 7 residues coordinate a divalent metal cation: His80, His108, Asp109, Glu112, Asp117, Ile118, and Asp178.

The protein belongs to the HDDC2 family. In terms of assembly, homodimer. Mn(2+) serves as cofactor. Requires Co(2+) as cofactor. Mg(2+) is required as a cofactor.

The catalysed reaction is a 2'-deoxyribonucleoside 5'-phosphate + H2O = a 2'-deoxyribonucleoside + phosphate. Its function is as follows. Catalyzes the dephosphorylation of the nucleoside 5'-monophosphates deoxyadenosine monophosphate (dAMP), deoxycytidine monophosphate (dCMP), deoxyguanosine monophosphate (dGMP) and deoxythymidine monophosphate (dTMP). The protein is 5'-deoxynucleotidase YBR242W of Saccharomyces cerevisiae (strain ATCC 204508 / S288c) (Baker's yeast).